Here is a 252-residue protein sequence, read N- to C-terminus: Indole-3-glycerol phosphate synthase (252 aa).

It belongs to the TrpC family.

It carries out the reaction 1-(2-carboxyphenylamino)-1-deoxy-D-ribulose 5-phosphate + H(+) = (1S,2R)-1-C-(indol-3-yl)glycerol 3-phosphate + CO2 + H2O. It participates in amino-acid biosynthesis; L-tryptophan biosynthesis; L-tryptophan from chorismate: step 4/5. This chain is Indole-3-glycerol phosphate synthase, found in Listeria monocytogenes serovar 1/2a (strain ATCC BAA-679 / EGD-e).